The sequence spans 228 residues: Cytidylate kinase (228 aa).

17-25 (GPTASGKGT) is an ATP binding site.

This sequence belongs to the cytidylate kinase family. Type 1 subfamily.

The protein localises to the cytoplasm. The enzyme catalyses CMP + ATP = CDP + ADP. The catalysed reaction is dCMP + ATP = dCDP + ADP. In Burkholderia pseudomallei (strain 1106a), this protein is Cytidylate kinase.